The chain runs to 360 residues: Phospho-N-acetylmuramoyl-pentapeptide-transferase (360 aa).

A run of 10 helical transmembrane segments spans residues 26–46 (AILG…KLIE), 74–94 (MGGL…GDLG), 97–117 (YVWV…IDDY), 134–154 (YILQ…TAAN), 168–188 (VMPQ…VGAS), 199–219 (GLAI…AYLS), 236–256 (SGEL…FLWF), 263–283 (VFMG…IAVL), 288–308 (ILLV…ILQV), and 338–358 (VIVR…ATLK).

The protein belongs to the glycosyltransferase 4 family. MraY subfamily. Mg(2+) is required as a cofactor.

It is found in the cell inner membrane. The catalysed reaction is UDP-N-acetyl-alpha-D-muramoyl-L-alanyl-gamma-D-glutamyl-meso-2,6-diaminopimeloyl-D-alanyl-D-alanine + di-trans,octa-cis-undecaprenyl phosphate = di-trans,octa-cis-undecaprenyl diphospho-N-acetyl-alpha-D-muramoyl-L-alanyl-D-glutamyl-meso-2,6-diaminopimeloyl-D-alanyl-D-alanine + UMP. It participates in cell wall biogenesis; peptidoglycan biosynthesis. Functionally, catalyzes the initial step of the lipid cycle reactions in the biosynthesis of the cell wall peptidoglycan: transfers peptidoglycan precursor phospho-MurNAc-pentapeptide from UDP-MurNAc-pentapeptide onto the lipid carrier undecaprenyl phosphate, yielding undecaprenyl-pyrophosphoryl-MurNAc-pentapeptide, known as lipid I. The polypeptide is Phospho-N-acetylmuramoyl-pentapeptide-transferase (Shewanella baltica (strain OS185)).